The sequence spans 365 residues: Anhydro-N-acetylmuramic acid kinase (365 aa).

9–16 contributes to the ATP binding site; sequence GTSLDGVD.

It belongs to the anhydro-N-acetylmuramic acid kinase family.

It catalyses the reaction 1,6-anhydro-N-acetyl-beta-muramate + ATP + H2O = N-acetyl-D-muramate 6-phosphate + ADP + H(+). It functions in the pathway amino-sugar metabolism; 1,6-anhydro-N-acetylmuramate degradation. It participates in cell wall biogenesis; peptidoglycan recycling. In terms of biological role, catalyzes the specific phosphorylation of 1,6-anhydro-N-acetylmuramic acid (anhMurNAc) with the simultaneous cleavage of the 1,6-anhydro ring, generating MurNAc-6-P. Is required for the utilization of anhMurNAc either imported from the medium or derived from its own cell wall murein, and thus plays a role in cell wall recycling. The protein is Anhydro-N-acetylmuramic acid kinase of Zymomonas mobilis subsp. mobilis (strain ATCC 31821 / ZM4 / CP4).